Consider the following 464-residue polypeptide: Argininosuccinate lyase (464 aa).

This sequence belongs to the lyase 1 family. Argininosuccinate lyase subfamily.

It localises to the cytoplasm. The enzyme catalyses 2-(N(omega)-L-arginino)succinate = fumarate + L-arginine. The protein operates within amino-acid biosynthesis; L-arginine biosynthesis; L-arginine from L-ornithine and carbamoyl phosphate: step 3/3. The chain is Argininosuccinate lyase from Pseudomonas syringae pv. tomato (strain ATCC BAA-871 / DC3000).